The sequence spans 145 residues: MELHTLKATPGSRKAKHRVGRGHAAGKGKQAGRGQSGQTKRSTVRLGFEGGQLPLFRRIPKRGFNNVNHVEYQTVNLVDLENKYSTGEVVSYETLLAKGLIKRNLPVKILAKGTLTKKLTIEIPTLSQSAKTAIEKVGGTIIEVK.

Positions 1–42 are disordered; the sequence is MELHTLKATPGSRKAKHRVGRGHAAGKGKQAGRGQSGQTKRS. A compositionally biased stretch (basic residues) spans 13 to 26; the sequence is RKAKHRVGRGHAAG.

This sequence belongs to the universal ribosomal protein uL15 family. As to quaternary structure, part of the 50S ribosomal subunit.

In terms of biological role, binds to the 23S rRNA. The chain is Large ribosomal subunit protein uL15 from Metamycoplasma arthritidis (strain 158L3-1) (Mycoplasma arthritidis).